Here is a 224-residue protein sequence, read N- to C-terminus: 7-cyano-7-deazaguanine synthase (224 aa).

Position 12 to 22 (12 to 22 (LSGGLDSSTVT)) interacts with ATP. Cysteine 193, cysteine 201, cysteine 204, and cysteine 207 together coordinate Zn(2+).

It belongs to the QueC family. Zn(2+) serves as cofactor.

The enzyme catalyses 7-carboxy-7-deazaguanine + NH4(+) + ATP = 7-cyano-7-deazaguanine + ADP + phosphate + H2O + H(+). Its pathway is purine metabolism; 7-cyano-7-deazaguanine biosynthesis. In terms of biological role, catalyzes the ATP-dependent conversion of 7-carboxy-7-deazaguanine (CDG) to 7-cyano-7-deazaguanine (preQ(0)). In Prochlorococcus marinus (strain MIT 9312), this protein is 7-cyano-7-deazaguanine synthase.